Reading from the N-terminus, the 427-residue chain is Peptidase B (427 aa).

Residues K195 and D200 each coordinate Mn(2+). The active site involves K207. 3 residues coordinate Mn(2+): D218, D277, and E279. R281 is an active-site residue.

Belongs to the peptidase M17 family. In terms of assembly, homohexamer. It depends on Mn(2+) as a cofactor.

Its subcellular location is the cytoplasm. The catalysed reaction is Release of an N-terminal amino acid, Xaa, from a peptide or arylamide. Xaa is preferably Glu or Asp but may be other amino acids, including Leu, Met, His, Cys and Gln.. Probably plays an important role in intracellular peptide degradation. In Salmonella choleraesuis (strain SC-B67), this protein is Peptidase B.